The sequence spans 401 residues: Nicotinate phosphoribosyltransferase (401 aa).

Histidine 221 is modified (phosphohistidine; by autocatalysis).

This sequence belongs to the NAPRTase family. In terms of processing, transiently phosphorylated on a His residue during the reaction cycle. Phosphorylation strongly increases the affinity for substrates and increases the rate of nicotinate D-ribonucleotide production. Dephosphorylation regenerates the low-affinity form of the enzyme, leading to product release.

It catalyses the reaction nicotinate + 5-phospho-alpha-D-ribose 1-diphosphate + ATP + H2O = nicotinate beta-D-ribonucleotide + ADP + phosphate + diphosphate. It participates in cofactor biosynthesis; NAD(+) biosynthesis; nicotinate D-ribonucleotide from nicotinate: step 1/1. In terms of biological role, catalyzes the synthesis of beta-nicotinate D-ribonucleotide from nicotinate and 5-phospho-D-ribose 1-phosphate at the expense of ATP. This chain is Nicotinate phosphoribosyltransferase, found in Pectobacterium atrosepticum (strain SCRI 1043 / ATCC BAA-672) (Erwinia carotovora subsp. atroseptica).